The following is a 376-amino-acid chain: Chaperone protein DnaJ (376 aa).

The region spanning 5 to 70 (DYYEVLGVAK…QKRAAYDQYG (66 aa)) is the J domain. The CR-type zinc-finger motif lies at 136 to 214 (GYDTQIRVPS…CHGSGKVKET (79 aa)). The Zn(2+) site is built by C149, C152, C166, C169, C188, C191, C202, and C205. 4 CXXCXGXG motif repeats span residues 149 to 156 (CGVCHGSG), 166 to 173 (CPTCHGQG), 188 to 195 (CPKCHGTG), and 202 to 209 (CAHCHGSG).

Belongs to the DnaJ family. In terms of assembly, homodimer. Zn(2+) is required as a cofactor.

It is found in the cytoplasm. Its function is as follows. Participates actively in the response to hyperosmotic and heat shock by preventing the aggregation of stress-denatured proteins and by disaggregating proteins, also in an autonomous, DnaK-independent fashion. Unfolded proteins bind initially to DnaJ; upon interaction with the DnaJ-bound protein, DnaK hydrolyzes its bound ATP, resulting in the formation of a stable complex. GrpE releases ADP from DnaK; ATP binding to DnaK triggers the release of the substrate protein, thus completing the reaction cycle. Several rounds of ATP-dependent interactions between DnaJ, DnaK and GrpE are required for fully efficient folding. Also involved, together with DnaK and GrpE, in the DNA replication of plasmids through activation of initiation proteins. The sequence is that of Chaperone protein DnaJ from Burkholderia mallei (strain NCTC 10229).